Here is a 385-residue protein sequence, read N- to C-terminus: 4-hydroxy-3-methylbut-2-en-1-yl diphosphate synthase (flavodoxin) 2 (385 aa).

Residues Cys281, Cys284, Cys316, and Glu323 each contribute to the [4Fe-4S] cluster site.

The protein belongs to the IspG family. [4Fe-4S] cluster is required as a cofactor.

The enzyme catalyses (2E)-4-hydroxy-3-methylbut-2-enyl diphosphate + oxidized [flavodoxin] + H2O + 2 H(+) = 2-C-methyl-D-erythritol 2,4-cyclic diphosphate + reduced [flavodoxin]. The protein operates within isoprenoid biosynthesis; isopentenyl diphosphate biosynthesis via DXP pathway; isopentenyl diphosphate from 1-deoxy-D-xylulose 5-phosphate: step 5/6. Its function is as follows. Converts 2C-methyl-D-erythritol 2,4-cyclodiphosphate (ME-2,4cPP) into 1-hydroxy-2-methyl-2-(E)-butenyl 4-diphosphate. This is 4-hydroxy-3-methylbut-2-en-1-yl diphosphate synthase (flavodoxin) 2 from Streptomyces avermitilis (strain ATCC 31267 / DSM 46492 / JCM 5070 / NBRC 14893 / NCIMB 12804 / NRRL 8165 / MA-4680).